We begin with the raw amino-acid sequence, 236 residues long: MKTIVICSGGLDSVSLAHKVAAEQELSGLLSFDYGQRHRKELDFAAACARRLGVPHQIIDIREIGRRLTGSALTDEVDVPDGHYAEETMKATVVPNRNAIMLAIAFGVAAARKADAVATAVHGGDHFIYPDCRPGFIDAFQAMQDHALDGYADVALYAPFVNVSKADIVADGARHDTPFAETWSCYKGGARHCGRCGTCVERREAFHLAGVPDPTEYDDPDFWVAATGSFVAEEVK.

7–17 (CSGGLDSVSLA) contacts ATP. 4 residues coordinate Zn(2+): Cys185, Cys193, Cys196, and Cys199.

This sequence belongs to the QueC family. The cofactor is Zn(2+).

It carries out the reaction 7-carboxy-7-deazaguanine + NH4(+) + ATP = 7-cyano-7-deazaguanine + ADP + phosphate + H2O + H(+). The protein operates within purine metabolism; 7-cyano-7-deazaguanine biosynthesis. In terms of biological role, catalyzes the ATP-dependent conversion of 7-carboxy-7-deazaguanine (CDG) to 7-cyano-7-deazaguanine (preQ(0)). This chain is 7-cyano-7-deazaguanine synthase, found in Rhizobium meliloti (strain 1021) (Ensifer meliloti).